The sequence spans 1005 residues: Translocated actin-recruiting phosphoprotein (1005 aa).

The span at 1 to 10 (MTNSISGDQP) shows a compositional bias: polar residues. Disordered regions lie at residues 1–36 (MTNS…SVST), 74–128 (PTVT…DYEP), 191–214 (SIDD…NSLR), 343–365 (SIDD…LNSL), 611–645 (WGTQ…TPSS), 661–748 (NIRD…DGPA), and 792–847 (TGTS…TSLM). 2 stretches are compositionally biased toward low complexity: residues 11–36 (TVTT…SVST) and 74–121 (PTVT…SSDH). Composition is skewed to polar residues over residues 191 to 205 (SIDD…NTSG) and 343 to 357 (SIDD…NTSG). Low complexity-rich tracts occupy residues 661 to 700 (NIRD…TDDI), 715 to 734 (GDIS…VSSS), and 831 to 846 (STTT…TTSL).

This sequence belongs to the chlamydial CPn_0572/CT_456/TC_0741 family. Post-translationally, phosphorylated on a tyrosine on attachment to the host cell. Tyrosine phosphorylation is temporally and spatially associated with recruitment of actin to the site of chlamydial entry. Phosphorylated Tarp seems to remain cytoplasmically exposed on the inclusion membrane at one side of internalized elementary bodies for several hours after entry.

The protein localises to the secreted. In terms of biological role, appears to initiate or participate in signaling events that regulate the actin recruitment, which ultimately leads to internalization. The polypeptide is Translocated actin-recruiting phosphoprotein (tarP) (Chlamydia trachomatis serovar L2 (strain ATCC VR-902B / DSM 19102 / 434/Bu)).